The following is a 217-amino-acid chain: Ras-related protein Rab-39A (217 aa).

6 residues coordinate GTP: serine 17, glycine 20, lysine 21, serine 22, cysteine 23, and threonine 44. Serine 22 contributes to the Mg(2+) binding site. The interval 39–47 is switch-I; that stretch reads PACDPTVGV. Mg(2+)-binding residues include threonine 44 and aspartate 68. Residues glycine 71, histidine 127, lysine 128, aspartate 130, alanine 158, and lysine 159 each contribute to the GTP site. The segment at 71–87 is switch-II; it reads GQERFRSITRSYYRNSV. Residues cysteine 215 and cysteine 217 are each lipidated (S-geranylgeranyl cysteine). Cysteine 217 carries the post-translational modification Cysteine methyl ester.

The protein belongs to the small GTPase superfamily. Rab family. Interacts (GDP-bound) with C9orf72; C9orf72 acts as a GEF for RAB39A. Interacts (GTP-bound) with HOPS complex components VPS39 and VPS41, and STX17; interaction between HOPS components and RAB39A contributes to obtaining a functional HOPS complex that promotes membrane fusion driven by STX17-SNAP29-VAMP8. Interacts with BECN1. Probably associates with the PI3K (PI3KC3/PI3K-III/class III phosphatidylinositol 3-kinase) complex. Interacts with UACA. Interacts with isoform a of RASSF1. Does not interact with isoform c of RASSF1. Mg(2+) serves as cofactor. In terms of processing, prenylated. Prenylation is required for association with cellular membranes.

The protein resides in the cell membrane. It is found in the cytoplasmic vesicle. Its subcellular location is the phagosome membrane. The protein localises to the late endosome membrane. It localises to the lysosome membrane. The protein resides in the autolysosome membrane. The catalysed reaction is GTP + H2O = GDP + phosphate + H(+). Its activity is regulated as follows. Regulated by guanine nucleotide exchange factors (GEFs) including c9Orf72, which promote the exchange of bound GDP for free GTP. Regulated by GTPase activating proteins (GAPs) which increase the GTP hydrolysis activity. Inhibited by GDP dissociation inhibitors (GDIs). Functionally, the small GTPases Rab are key regulators of intracellular membrane trafficking, from the formation of transport vesicles to their fusion with membranes. Rabs cycle between an inactive GDP-bound form and an active GTP-bound form that is able to recruit to membranes different sets of downstream effectors directly responsible for vesicle formation, movement, tethering and fusion. RAB39A regulates autophagosome-lysosome fusion via recruitment of the HOPS endosomal tethering complex onto lysosomes; this process involves lysosomal RAB39A and autophagosomal RAB2A recruitment of HOPS subcomplexes VPS41-VPS16-VPS18-VPS33A and VPS39-VPS11, respectively, which assemble into a functional complex to mediate membrane tethering and SNAREs-driven membrane fusion. Also negatively regulates lipopolysaccharide (LPS)-induced autophagosome formation in macrophages, possibly by implicating PI3K. Promotes the delivery of MHC-I molecules from the ER to phagosomes and the generation of peptide-loaded MHC-I complexes in phagosomes, thus enhancing antigen cross-presentation by dendritic cells. Plays a role in the maturation and acidification of phagosomes that engulf pathogens, such as S.aureus and M.tuberculosis. Plays a role in the fusion of phagosomes with lysosomes. May be involved in multiple neurite formation. This chain is Ras-related protein Rab-39A, found in Mus musculus (Mouse).